We begin with the raw amino-acid sequence, 154 residues long: MAARLCCQLDPARDVLCLRPVGAESRGRPVSGSLGALPSPSPSAVPADHGAHLSLRGLPVCAFSSAGPCALRFTSARRMETTVNANQVLPKVLHKRTLGLSALSTTDLEAYFKDCVFKDWEELGEEIRLKVFVLGGCRHKLVCVPAPCNFFTSA.

Positions 68–117 (PCALRFTSARRMETTVNANQVLPKVLHKRTLGLSALSTTDLEAYFKDCVF) are mitochondrial targeting sequence.

This sequence belongs to the orthohepadnavirus protein X family. May form homodimer. May interact with host CEBPA, CFLAR, CREB1, DDB1, E4F1, HBXIP, HSPD1/HSP60, NFKBIA, POLR2E and SMAD4. Interacts with host SMC5-SMC6 complex and induces its degradation. Interacts with host TRPC4AP; leading to prevent ubiquitination of TRPC4AP. Interacts with host PLSCR1; this interaction promotes ubiquitination and degradation of HBx and impairs HBx-mediated cell proliferation. In terms of processing, a fraction may be phosphorylated in insect cells and HepG2 cells, a human hepatoblastoma cell line. Phosphorylated in vitro by host protein kinase C or mitogen-activated protein kinase. N-acetylated in insect cells.

It is found in the host cytoplasm. The protein localises to the host nucleus. Its subcellular location is the host mitochondrion. Functionally, multifunctional protein that plays a role in silencing host antiviral defenses and promoting viral transcription. Does not seem to be essential for HBV infection. May be directly involved in development of cirrhosis and liver cancer (hepatocellular carcinoma). Most of cytosolic activities involve modulation of cytosolic calcium. The effect on apoptosis is controversial depending on the cell types in which the studies have been conducted. May induce apoptosis by localizing in mitochondria and causing loss of mitochondrial membrane potential. May also modulate apoptosis by binding host CFLAR, a key regulator of the death-inducing signaling complex (DISC). Promotes viral transcription by using the host E3 ubiquitin ligase DDB1 to target the SMC5-SMC6 complex to proteasomal degradation. This host complex would otherwise bind to viral episomal DNA, and prevents its transcription. Moderately stimulates transcription of many different viral and cellular transcription elements. Promoters and enhancers stimulated by HBx contain DNA binding sites for NF-kappa-B, AP-1, AP-2, c-EBP, ATF/CREB, or the calcium-activated factor NF-AT. The chain is Protein X from Homo sapiens (Human).